Consider the following 255-residue polypeptide: 2-succinyl-6-hydroxy-2,4-cyclohexadiene-1-carboxylate synthase (255 aa).

It belongs to the AB hydrolase superfamily. MenH family. As to quaternary structure, monomer.

It carries out the reaction 5-enolpyruvoyl-6-hydroxy-2-succinyl-cyclohex-3-ene-1-carboxylate = (1R,6R)-6-hydroxy-2-succinyl-cyclohexa-2,4-diene-1-carboxylate + pyruvate. Its pathway is quinol/quinone metabolism; 1,4-dihydroxy-2-naphthoate biosynthesis; 1,4-dihydroxy-2-naphthoate from chorismate: step 3/7. It participates in quinol/quinone metabolism; menaquinone biosynthesis. In terms of biological role, catalyzes a proton abstraction reaction that results in 2,5-elimination of pyruvate from 2-succinyl-5-enolpyruvyl-6-hydroxy-3-cyclohexene-1-carboxylate (SEPHCHC) and the formation of 2-succinyl-6-hydroxy-2,4-cyclohexadiene-1-carboxylate (SHCHC). The protein is 2-succinyl-6-hydroxy-2,4-cyclohexadiene-1-carboxylate synthase of Serratia proteamaculans (strain 568).